The following is a 216-amino-acid chain: Ras-related protein Rab-11A (216 aa).

At glycine 2 the chain carries N-acetylglycine. The GTP site is built by serine 20, glycine 21, valine 22, glycine 23, lysine 24, serine 25, asparagine 26, asparagine 37, leucine 38, serine 40, serine 42, and threonine 43. Serine 25 contacts Mg(2+). The Switch 1 motif lies at 36-47; it reads FNLESKSTIGVE. Mg(2+)-binding residues include threonine 43 and aspartate 66. The Switch 2 signature appears at 67 to 86; sequence TAGQERYRAITSAYYRGAVG. GTP contacts are provided by glycine 69, asparagine 124, lysine 125, aspartate 127, alanine 155, and leucine 156. Residues 183–207 are disordered; sequence DRRENDMSPSNNVVPIHVPPTTENK. 2 S-geranylgeranyl cysteine lipidation sites follow: cysteine 212 and cysteine 213. Residue cysteine 213 is modified to Cysteine methyl ester. Residues 214-216 constitute a propeptide, removed in mature form; the sequence is QNI.

Belongs to the small GTPase superfamily. Rab family. In terms of assembly, interacts (GTP-bound form) with RAB11FIPs (via their C-termini) including RAB11FIP1, RAB11FIP2, RAB11FIP3, RAB11FIP4 and RAB11FIP5 effectors. Forms a complex with RAB11FIP3 and dynein intermediate chain DYNC1LI1; the interaction between RAB11A1 and RAB11FIP3 is direct; the complex regulates endocytic trafficking. Interacts with EVI5; EVI5 and RAB11FIP3 may be mutually exclusive and compete for binding RAB11A. Interacts with SGSM1, SGSM2, SGSM3 and VIPAS39. Interacts with EXOC6 in a GTP-dependent manner. Interacts with RAB11FIP5. Interacts with STXBP6. Interacts (GDP-bound form) with ZFYVE27. Interacts with BIRC6/bruce. May interact with TBC1D14. Interacts with UNC119; in a cell cycle-dependent manner. GDP-bound and nucleotide-free forms interact with SH3BP5. Interacts (GDP-bound form) with KIF5A in a ZFYVE27-dependent manner. Interacts (GDP-bound form) with RELCH. Found in a complex composed of RELCH, OSBP1 and RAB11A. Interacts with TBC1D12. Interacts with DEF6. Interacts with ATP9A. Forms a heterotetramer with RAB11FIP3; the GTP-bound form is preferred for binding. Forms a complex with Rabin8/RAB3IP and RAB11FIP3, probably a heterohexamer with two of each protein subunit, where Rabin8/RAB3IP and RAB11FIP3 simultaneously bind to RAB11A; the complex promotes preciliary trafficking and cilia growth. Forms a complex containing RAB11A, ASAP1, Rabin8/RAB3IP, RAP11FIP3 and ARF4; the complex promotes preciliary trafficking; the complex binds to RHO in photoreceptor cells and promotes RHO ciliary transport. Interacts (GTP-bound form) with WDR44; the interaction prevents RAB11A-RAB3IP-RAB11FIP3 complex formation. Mg(2+) is required as a cofactor.

It localises to the cell membrane. The protein localises to the endosome membrane. Its subcellular location is the recycling endosome membrane. It is found in the cleavage furrow. The protein resides in the cytoplasmic vesicle. It localises to the phagosome. The protein localises to the cytoplasmic vesicle membrane. Its subcellular location is the golgi apparatus. It is found in the trans-Golgi network. The enzyme catalyses GTP + H2O = GDP + phosphate + H(+). Its activity is regulated as follows. Regulated by guanine nucleotide exchange factors (GEFs) which promote the exchange of bound GDP for free GTP. Regulated by GTPase activating proteins (GAPs) which increase the GTP hydrolysis activity. Inhibited by GDP dissociation inhibitors (GDIs) which prevent Rab-GDP dissociation. Functionally, the small GTPases Rab are key regulators of intracellular membrane trafficking, from the formation of transport vesicles to their fusion with membranes. Rabs cycle between an inactive GDP-bound form and an active GTP-bound form that is able to recruit to membranes different set of downstream effectors directly responsible for vesicle formation, movement, tethering and fusion. The small Rab GTPase RAB11A regulates endocytic recycling. Forms a functional Rab11/RAB11FIP3/dynein complex that regulates the movement of peripheral sorting endosomes (SE) along microtubule tracks toward the microtubule organizing center/centrosome, generating the endosomal recycling compartment (ERC). Acts as a major regulator of membrane delivery during cytokinesis. Together with MYO5B and RAB8A participates in epithelial cell polarization. Together with Rabin8/RAB3IP, RAB8A, the exocyst complex, PARD3, PRKCI, ANXA2, CDC42 and DNMBP promotes transcytosis of PODXL to the apical membrane initiation sites (AMIS), apical surface formation and lumenogenesis. Together with MYO5B participates in CFTR trafficking to the plasma membrane and TF (Transferrin) recycling in nonpolarized cells. Required in a complex with MYO5B and RAB11FIP2 for the transport of NPC1L1 to the plasma membrane. Participates in the sorting and basolateral transport of CDH1 from the Golgi apparatus to the plasma membrane. Regulates the recycling of FCGRT (receptor of Fc region of monomeric IgG) to basolateral membranes. May also play a role in melanosome transport and release from melanocytes. Promotes Rabin8/RAB3IP preciliary vesicular trafficking to mother centriole by forming a ciliary targeting complex containing Rab11, ASAP1, Rabin8/RAB3IP, RAB11FIP3 and ARF4, thereby regulating ciliogenesis initiation. On the contrary, upon LPAR1 receptor signaling pathway activation, interaction with phosphorylated WDR44 prevents Rab11-RAB3IP-RAB11FIP3 complex formation and cilia growth. Participates in the export of a subset of neosynthesized proteins through a Rab8-Rab10-Rab11-endososomal dependent export route via interaction with WDR44. The polypeptide is Ras-related protein Rab-11A (Bos taurus (Bovine)).